Here is a 150-residue protein sequence, read N- to C-terminus: Cytochrome c oxidase subunit 5A, mitochondrial (150 aa).

The transit peptide at 1–41 directs the protein to the mitochondrion; sequence MLGAALRRCAVAATTWAGPRGLLHSSRTPGPAAAIQSVRCY. An SIFI-degron motif is present at residues 2 to 17; that stretch reads LGAALRRCAVAATTWA. N6-acetyllysine occurs at positions 87 and 113. The residue at position 141 (Thr-141) is a Phosphothreonine.

The protein belongs to the cytochrome c oxidase subunit 5A family. In terms of assembly, component of the cytochrome c oxidase (complex IV, CIV), a multisubunit enzyme composed of 14 subunits. The complex is composed of a catalytic core of 3 subunits MT-CO1, MT-CO2 and MT-CO3, encoded in the mitochondrial DNA, and 11 supernumerary subunits COX4I, COX5A, COX5B, COX6A, COX6B, COX6C, COX7A, COX7B, COX7C, COX8 and NDUFA4, which are encoded in the nuclear genome. The complex exists as a monomer or a dimer and forms supercomplexes (SCs) in the inner mitochondrial membrane with NADH-ubiquinone oxidoreductase (complex I, CI) and ubiquinol-cytochrome c oxidoreductase (cytochrome b-c1 complex, complex III, CIII), resulting in different assemblies (supercomplex SCI(1)III(2)IV(1) and megacomplex MCI(2)III(2)IV(2)). Interacts with AFG1L. Interacts with RAB5IF. Post-translationally, in response to mitochondrial stress, the precursor protein is ubiquitinated by the SIFI complex in the cytoplasm before mitochondrial import, leading to its degradation. Within the SIFI complex, UBR4 initiates ubiquitin chain that are further elongated or branched by KCMF1.

It localises to the mitochondrion inner membrane. The protein operates within energy metabolism; oxidative phosphorylation. Functionally, component of the cytochrome c oxidase, the last enzyme in the mitochondrial electron transport chain which drives oxidative phosphorylation. The respiratory chain contains 3 multisubunit complexes succinate dehydrogenase (complex II, CII), ubiquinol-cytochrome c oxidoreductase (cytochrome b-c1 complex, complex III, CIII) and cytochrome c oxidase (complex IV, CIV), that cooperate to transfer electrons derived from NADH and succinate to molecular oxygen, creating an electrochemical gradient over the inner membrane that drives transmembrane transport and the ATP synthase. Cytochrome c oxidase is the component of the respiratory chain that catalyzes the reduction of oxygen to water. Electrons originating from reduced cytochrome c in the intermembrane space (IMS) are transferred via the dinuclear copper A center (CU(A)) of subunit 2 and heme A of subunit 1 to the active site in subunit 1, a binuclear center (BNC) formed by heme A3 and copper B (CU(B)). The BNC reduces molecular oxygen to 2 water molecules using 4 electrons from cytochrome c in the IMS and 4 protons from the mitochondrial matrix. This is Cytochrome c oxidase subunit 5A, mitochondrial (COX5A) from Colobus guereza (Mantled guereza).